Consider the following 126-residue polypeptide: MAEITKADVISFIEKMSVLELAEMVKELEEKFGVSAAAPVAVAAVAGPAAAEAAEEKTEFDVILKAAGANKIGVIKVVRALTSLGLKEAKDLVDGAPQPLKTGVSKEEAEEAKKQLVEAGAEVEIK.

Belongs to the bacterial ribosomal protein bL12 family. Homodimer. Part of the ribosomal stalk of the 50S ribosomal subunit. Forms a multimeric L10(L12)X complex, where L10 forms an elongated spine to which 2 to 4 L12 dimers bind in a sequential fashion. Binds GTP-bound translation factors.

Its function is as follows. Forms part of the ribosomal stalk which helps the ribosome interact with GTP-bound translation factors. Is thus essential for accurate translation. In Geotalea daltonii (strain DSM 22248 / JCM 15807 / FRC-32) (Geobacter daltonii), this protein is Large ribosomal subunit protein bL12.